We begin with the raw amino-acid sequence, 132 residues long: Guanyl-specific ribonuclease C2 (132 aa).

An N-terminal signal peptide occupies residues 1–26 (MLYNKLITIAALLVPALAAPQGLDVR). 2 disulfides stabilise this stretch: cysteine 28/cysteine 36 and cysteine 32/cysteine 129. Histidine 66 is a catalytic residue. The active-site Proton acceptor is glutamate 84. Residue histidine 118 is the Proton donor of the active site.

This sequence belongs to the ribonuclease N1/T1 family.

Its subcellular location is the secreted. The enzyme catalyses [RNA] containing guanosine + H2O = an [RNA fragment]-3'-guanosine-3'-phosphate + a 5'-hydroxy-ribonucleotide-3'-[RNA fragment].. The sequence is that of Guanyl-specific ribonuclease C2 from Aspergillus clavatus (strain ATCC 1007 / CBS 513.65 / DSM 816 / NCTC 3887 / NRRL 1 / QM 1276 / 107).